The following is a 293-amino-acid chain: uncharacterized protein (293 aa).

Disordered regions lie at residues 20–148 (ELHS…NNNT) and 226–283 (RENQ…GNKN). Composition is skewed to acidic residues over residues 37–47 (LEDDEEYDDDQ), 56–91 (EEFDYDNDYNDEEFYDEDDDFKEDDDEEEEEEDDEM), and 99–112 (NIDDDDYEEDEEEQ). Composition is skewed to low complexity over residues 117–148 (TNNNNNTTTTTPYTTYNNNNNNDINNNNNNNT) and 232–283 (NSNS…GNKN).

This is an uncharacterized protein from Dictyostelium discoideum (Social amoeba).